Reading from the N-terminus, the 189-residue chain is Elongation factor P (189 aa).

N6-(3,6-diaminohexanoyl)-5-hydroxylysine is present on Lys34.

The protein belongs to the elongation factor P family. May be beta-lysylated on the epsilon-amino group of Lys-34 by the combined action of EpmA and EpmB, and then hydroxylated on the C5 position of the same residue by EpmC (if this protein is present). Lysylation is critical for the stimulatory effect of EF-P on peptide-bond formation. The lysylation moiety may extend toward the peptidyltransferase center and stabilize the terminal 3-CCA end of the tRNA. Hydroxylation of the C5 position on Lys-34 may allow additional potential stabilizing hydrogen-bond interactions with the P-tRNA.

The protein localises to the cytoplasm. Its pathway is protein biosynthesis; polypeptide chain elongation. Functionally, involved in peptide bond synthesis. Alleviates ribosome stalling that occurs when 3 or more consecutive Pro residues or the sequence PPG is present in a protein, possibly by augmenting the peptidyl transferase activity of the ribosome. Modification of Lys-34 is required for alleviation. In Nitrosococcus oceani (strain ATCC 19707 / BCRC 17464 / JCM 30415 / NCIMB 11848 / C-107), this protein is Elongation factor P.